The following is a 67-amino-acid chain: DNA-directed RNA polymerase subunit omega (67 aa).

It belongs to the RNA polymerase subunit omega family. The RNAP catalytic core consists of 2 alpha, 1 beta, 1 beta' and 1 omega subunit. When a sigma factor is associated with the core the holoenzyme is formed, which can initiate transcription.

It carries out the reaction RNA(n) + a ribonucleoside 5'-triphosphate = RNA(n+1) + diphosphate. In terms of biological role, promotes RNA polymerase assembly. Latches the N- and C-terminal regions of the beta' subunit thereby facilitating its interaction with the beta and alpha subunits. This Legionella pneumophila (strain Paris) protein is DNA-directed RNA polymerase subunit omega.